Reading from the N-terminus, the 286-residue chain is Pantothenate synthetase (286 aa).

30-37 contacts ATP; sequence MGNLHAGH. His37 (proton donor) is an active-site residue. (R)-pantoate is bound at residue Gln61. Gln61 is a binding site for beta-alanine. 149–152 is an ATP binding site; the sequence is GEKD. Gln155 contributes to the (R)-pantoate binding site. Residues Val178 and 186–189 each bind ATP; that span reads MSSR.

Belongs to the pantothenate synthetase family. Homodimer.

Its subcellular location is the cytoplasm. It carries out the reaction (R)-pantoate + beta-alanine + ATP = (R)-pantothenate + AMP + diphosphate + H(+). Its pathway is cofactor biosynthesis; (R)-pantothenate biosynthesis; (R)-pantothenate from (R)-pantoate and beta-alanine: step 1/1. Its function is as follows. Catalyzes the condensation of pantoate with beta-alanine in an ATP-dependent reaction via a pantoyl-adenylate intermediate. In Thioalkalivibrio sulfidiphilus (strain HL-EbGR7), this protein is Pantothenate synthetase.